We begin with the raw amino-acid sequence, 344 residues long: Heat-inducible transcription repressor HrcA (344 aa).

It belongs to the HrcA family.

Negative regulator of class I heat shock genes (grpE-dnaK-dnaJ and groELS operons). Prevents heat-shock induction of these operons. The chain is Heat-inducible transcription repressor HrcA from Geobacillus kaustophilus (strain HTA426).